Here is a 491-residue protein sequence, read N- to C-terminus: MTENLQSESIPHEILPKEPFDLPMNNLKSSPKNKDSEKRINNSIAESEQVVDSALSNPETNANEDIIAPQLPSQNSEIIEKNSPVNKLNSSTSLTTHQLASLPKLEVTDHDNVSEAETVVLNEDEEKETSLVGSVSVTEDLGDSSAIGRTILVNNSVEPQMENTANITIVSPSLKESDFESEEKATNDNNGLIETNHNSKLEESSEHEEEEDEESNIERTEDSDHQIPQRGGTLEAPRKGGPRSGVGSRKRKRATVSRKWSTNSESKIKRVALETSQEESDREIADRRSASEQAHEADDEKAIKRKEAFDALLNIETEFTFLRNRLYGKKLLKLNEHEEMIQNETHERFNACIDLITERRDDRVRLATENLMKQLGNIKNVMDYVTKQRKYQLLFDKRRIRQALLTKIATKCFQLLNKQKSVHDPTYITQKTMSYRQSALLQKQRIEYEAAVLCELNSFAGFPTAPIIETASFDDIRNDLLEMGCLSENQD.

2 disordered regions span residues 1–74 (MTEN…LPSQ) and 155–301 (NSVE…DDEK). Residues 10 to 20 (IPHEILPKEPF) show a composition bias toward basic and acidic residues. Polar residues-rich tracts occupy residues 54–63 (ALSNPETNAN) and 155–171 (NSVE…TIVS). Positions 175–186 (KESDFESEEKAT) are enriched in basic and acidic residues. The segment covering 187 to 196 (NDNNGLIETN) has biased composition (polar residues). Ser-204 bears the Phosphoserine mark. Residues 205–215 (SEHEEEEDEES) are compositionally biased toward acidic residues. 2 stretches are compositionally biased toward basic and acidic residues: residues 216-227 (NIERTEDSDHQI) and 282-301 (REIA…DDEK). Phosphoserine is present on Ser-223.

In terms of assembly, component of the RPD3C(L) complex.

The protein localises to the nucleus. Its function is as follows. Component of the RPD3C(L) histone deacetylase complex (HDAC) responsible for the deacetylation of lysine residues on the N-terminal part of the core histones (H2A, H2B, H3 and H4). Histone deacetylation gives a tag for epigenetic repression and plays an important role in transcriptional regulation, cell cycle progression and developmental events. This Schizosaccharomyces pombe (strain 972 / ATCC 24843) (Fission yeast) protein is Transcriptional regulatory protein dep1 (dep1).